The sequence spans 136 residues: DNA-directed RNA polymerase subunit omega (136 aa).

Residues Glu79 to Ala107 form a disordered region. Residues Ser89–Ala107 show a composition bias toward low complexity.

Belongs to the RNA polymerase subunit omega family. As to quaternary structure, the RNAP catalytic core consists of 2 alpha, 1 beta, 1 beta' and 1 omega subunit. When a sigma factor is associated with the core the holoenzyme is formed, which can initiate transcription.

The enzyme catalyses RNA(n) + a ribonucleoside 5'-triphosphate = RNA(n+1) + diphosphate. Promotes RNA polymerase assembly. Latches the N- and C-terminal regions of the beta' subunit thereby facilitating its interaction with the beta and alpha subunits. This Methylobacterium radiotolerans (strain ATCC 27329 / DSM 1819 / JCM 2831 / NBRC 15690 / NCIMB 10815 / 0-1) protein is DNA-directed RNA polymerase subunit omega.